Consider the following 325-residue polypeptide: Peroxidase 47 (325 aa).

The signal sequence occupies residues 1–36 (MLTRFKKQNNKMVRANIVSMVLLMHAIVGFPFHARG). 4 disulfide bridges follow: Cys-46/Cys-125, Cys-79/Cys-84, Cys-131/Cys-321, and Cys-209/Cys-235. Catalysis depends on His-77, which acts as the Proton acceptor. Asp-78, Gly-83, Asp-85, and Ser-87 together coordinate Ca(2+). Pro-172 lines the substrate pocket. N-linked (GlcNAc...) asparagine glycosylation occurs at Asn-177. His-202 provides a ligand contact to heme b. Thr-203 contributes to the Ca(2+) binding site. Ca(2+)-binding residues include Asp-246, Thr-248, and Asp-253.

Belongs to the peroxidase family. Classical plant (class III) peroxidase subfamily. It depends on heme b as a cofactor. Ca(2+) is required as a cofactor.

It is found in the secreted. It carries out the reaction 2 a phenolic donor + H2O2 = 2 a phenolic radical donor + 2 H2O. In terms of biological role, removal of H(2)O(2), oxidation of toxic reductants, biosynthesis and degradation of lignin, suberization, auxin catabolism, response to environmental stresses such as wounding, pathogen attack and oxidative stress. These functions might be dependent on each isozyme/isoform in each plant tissue. This is Peroxidase 47 (PER47) from Arabidopsis thaliana (Mouse-ear cress).